The chain runs to 888 residues: Extra-large guanine nucleotide-binding protein 1 (888 aa).

Residues 98-119 (SVIEHTEEEEEEEGGDGEDCEL) form a disordered region. The segment covering 103–118 (TEEEEEEEGGDGEDCE) has biased composition (acidic residues). Positions 205 to 222 (RRVRVVPVKKQPQTKGKK) match the Nuclear localization signal motif. Residues 225–268 (CYRCFKGSRFTEKEVCLVCDAKYCNSCVLRAMGSMPEGRKCVTC) form an RING-type; degenerate zinc finger. Positions 482–879 (TLQKILLVGN…NICMSEYSMY (398 aa)) constitute a G-alpha domain. The tract at residues 485–498 (KILLVGNSGSGTST) is G1 motif. GTP-binding positions include 490-498 (GNSGSGTST) and 661-669 (DILYAEGVT). 2 residues coordinate Ca(2+): Ser497 and Thr669. The interval 661–669 (DILYAEGVT) is G2 motif. A G3 motif region spans residues 702-711 (YQLIRVPSRG). The G4 motif stretch occupies residues 770–777 (LLILNKYD). 774–777 (NKYD) is a binding site for GTP. Residues 843 to 848 (SKSLDP) are G5 motif.

The protein belongs to the G-alpha family. XLG subfamily. It depends on Ca(2+) as a cofactor. In terms of tissue distribution, ubiquitous. Strongly expressed in vascular tissues, root and shoot meristems and lateral root primordia.

It localises to the nucleus. Functionally, guanine nucleotide-binding proteins (G proteins) are involved as modulators or transducers in various transmembrane signaling systems. Binds GTP with specificity. Plays a role in the root morphogenesis by regulation of the cell proliferation. The sequence is that of Extra-large guanine nucleotide-binding protein 1 (XLG1) from Arabidopsis thaliana (Mouse-ear cress).